The primary structure comprises 249 residues: Ubiquinone biosynthesis O-methyltransferase (249 aa).

Residues 1–21 (MIPEVSNEASQPAAHRQENVD) form a disordered region. 4 residues coordinate S-adenosyl-L-methionine: Arg-52, Gly-72, Asp-93, and Met-137.

It belongs to the methyltransferase superfamily. UbiG/COQ3 family.

It carries out the reaction a 3-demethylubiquinol + S-adenosyl-L-methionine = a ubiquinol + S-adenosyl-L-homocysteine + H(+). The enzyme catalyses a 3-(all-trans-polyprenyl)benzene-1,2-diol + S-adenosyl-L-methionine = a 2-methoxy-6-(all-trans-polyprenyl)phenol + S-adenosyl-L-homocysteine + H(+). The protein operates within cofactor biosynthesis; ubiquinone biosynthesis. Its function is as follows. O-methyltransferase that catalyzes the 2 O-methylation steps in the ubiquinone biosynthetic pathway. The polypeptide is Ubiquinone biosynthesis O-methyltransferase (Sodalis glossinidius (strain morsitans)).